We begin with the raw amino-acid sequence, 189 residues long: Peptidyl-tRNA hydrolase (189 aa).

Position 15 (Tyr15) interacts with tRNA. His20 acts as the Proton acceptor in catalysis. The tRNA site is built by Phe66, Asn68, and Asn114.

This sequence belongs to the PTH family. In terms of assembly, monomer.

It is found in the cytoplasm. It carries out the reaction an N-acyl-L-alpha-aminoacyl-tRNA + H2O = an N-acyl-L-amino acid + a tRNA + H(+). Functionally, hydrolyzes ribosome-free peptidyl-tRNAs (with 1 or more amino acids incorporated), which drop off the ribosome during protein synthesis, or as a result of ribosome stalling. Catalyzes the release of premature peptidyl moieties from peptidyl-tRNA molecules trapped in stalled 50S ribosomal subunits, and thus maintains levels of free tRNAs and 50S ribosomes. In Streptococcus pneumoniae (strain CGSP14), this protein is Peptidyl-tRNA hydrolase.